The sequence spans 554 residues: Potassium-transporting ATPase potassium-binding subunit (554 aa).

The next 12 membrane-spanning stretches (helical) occupy residues 3–23 (PVLAGVLQLLALTAALALAHV), 60–80 (PAYLRGVLAFSLAGVLFLYLL), 131–151 (GLAVQNFVSAAVGIAVAVALV), 174–194 (VRVLVPIAAVGAVILVACGVI), 252–272 (LFEIFLILLIPVALTRTFGIM), 279–299 (GYAILGTMAAIWAGFVALMMW), 323–343 (FGIGGSSLFAVTTTLTSTGAV), 352–372 (GLGGGITMLGMMLGEIAPGGV), 375–395 (GLYGMLVMAVVAVFIAGLMVG), 412–432 (FAACYILITPALVLVFTAAAM), 481–501 (LGLAMLLGRFVPMVFVLALAG), and 522–542 (LFAGLLAGAVLIITGLTYFPA).

This sequence belongs to the KdpA family. The system is composed of three essential subunits: KdpA, KdpB and KdpC.

The protein localises to the cell membrane. In terms of biological role, part of the high-affinity ATP-driven potassium transport (or Kdp) system, which catalyzes the hydrolysis of ATP coupled with the electrogenic transport of potassium into the cytoplasm. This subunit binds the extracellular potassium ions and delivers the ions to the membrane domain of KdpB through an intramembrane tunnel. The protein is Potassium-transporting ATPase potassium-binding subunit of Streptomyces coelicolor (strain ATCC BAA-471 / A3(2) / M145).